The sequence spans 76 residues: Theta defensin subunit C (76 aa).

Residues 1–22 (MRTFAFLTAMLLLVALHAQAEA) form the signal peptide. Residues 23 to 64 (RQARADEAAIQEQPGADDQGMAHSFTRNESAVLPLSESERGL) constitute a propeptide that is removed on maturation. A Cyclopeptide (Arg-Cys) (interchain with C-73 in subunit A); in form BTD-4 cross-link involves residue Arg-65. Cys-68 and Cys-73 are oxidised to a cystine. Cys-73 is covalently cross-linked (Cyclopeptide (Cys-Arg) (interchain with R-65 in subunit A); in form BTD-4). A propeptide spanning residues 74–76 (RLL) is cleaved from the precursor.

It belongs to the alpha-defensin family. Theta subfamily. BTD-4 is a cyclic heterodimer composed of subunits A and C; disulfide-linked. Forms a cyclic peptide with subunit A (BTD-4). An additional intersubunit disulfide bond is formed.

BTD-4 has antimicrobial activity against the Gram-negative bacterium E.coli ML35, the Gram-positive bacterium S.aureus 502a, and the fungus C.albicans 16820. The protein is Theta defensin subunit C (BTDC) of Papio anubis (Olive baboon).